The primary structure comprises 114 residues: Tyrosine-protein phosphatase 11 (114 aa).

Positions 1–114 (WRMIWEHNTR…EAKHTGPTIV (114 aa)) constitute a Tyrosine-protein phosphatase domain. D81 is a substrate binding site.

Belongs to the protein-tyrosine phosphatase family.

It carries out the reaction O-phospho-L-tyrosyl-[protein] + H2O = L-tyrosyl-[protein] + phosphate. The chain is Tyrosine-protein phosphatase 11 (STY-11) from Styela plicata (Wrinkled sea squirt).